The primary structure comprises 641 residues: Homeobox protein ceh-38 (641 aa).

2 stretches are compositionally biased toward polar residues: residues 1–14 (MESS…TNGT) and 28–38 (DPSSTFINNTG). 2 disordered regions span residues 1-79 (MESS…TSSA) and 129-244 (LHVD…GDRM). Residues 52-79 (TISPHPITPSASTSSATSATEEPATSSA) show a composition bias toward low complexity. The segment covering 131–140 (VDSRRRESHD) has biased composition (basic and acidic residues). Polar residues-rich tracts occupy residues 167-183 (TPTN…SSLL) and 190-204 (NTIG…TFGS). Positions 308 to 394 (NAEIGDDIYI…TRLAILDMKT (87 aa)) form a DNA-binding region, CUT. Disordered regions lie at residues 398–428 (NRAS…PVSK), 485–508 (GGNI…VGDT), and 552–641 (FGVS…LAAN). The homeobox DNA-binding region spans 427 to 486 (SKRPRLVFTDIQKRTLQAIFKETQRPSREMQQTIAEHLRLDLSTVANFFMNARRRSRLGG). Acidic residues predominate over residues 571–604 (HEDDEELDELNDSELAYEEDVEIGDEEEEDEEQA). The segment covering 613 to 626 (KVEELEEKTVIKEE) has biased composition (basic and acidic residues).

The protein belongs to the CUT homeobox family. As to expression, expressed in the embryo. After gastrulation, expressed in almost all cells. During larval and adult stages, expressed in the dorsal and ventral nerve cord, head and tail neurons, pharynx, gut and head.

Its subcellular location is the nucleus. Functionally, probable DNA-binding regulatory protein involved in cell-fate specification. This is Homeobox protein ceh-38 (ceh-38) from Caenorhabditis elegans.